The primary structure comprises 60 residues: Conotoxin Cal6.20 (60 aa).

Residues 1–22 (MKLTCVLIVAVLILTACQVIAA) form the signal peptide. Intrachain disulfides connect Cys-32–Cys-42, Cys-35–Cys-48, and Cys-41–Cys-55.

It belongs to the conotoxin O1 superfamily. Expressed by the venom duct.

It localises to the secreted. Functionally, probable neurotoxin. The chain is Conotoxin Cal6.20 from Californiconus californicus (California cone).